Reading from the N-terminus, the 96-residue chain is Integration host factor subunit beta (96 aa).

Residues 59-78 (RVGRNPKTGETVSLPGKYVP) form a disordered region.

This sequence belongs to the bacterial histone-like protein family. In terms of assembly, heterodimer of an alpha and a beta chain.

In terms of biological role, this protein is one of the two subunits of integration host factor, a specific DNA-binding protein that functions in genetic recombination as well as in transcriptional and translational control. The chain is Integration host factor subunit beta from Thioalkalivibrio sulfidiphilus (strain HL-EbGR7).